We begin with the raw amino-acid sequence, 395 residues long: MSKKQTTAAATAPIDILELHTQIQQFIETESKNVVVLEAKLVKINQLLECDYLRPRIIYRLKMEKEMCEKLIIEHHNLDFFNIDVAHLIEEYHMLNRTEIVLPFFSPTKDQLTQQLEHKRKKMDLEKQFLNKLKNYTHLKNFEFMMKHCEFIPKSSPPPCVCGNKTEFIKDDDRAVCAICCTEQSLISNTSSFSDVGRVNMASKYTYNRKVHFRDCITQYQGKQKTHIPEEIYTILETKLLEKNLLNTEPGLTVEKRYEKVTRAMVLDILKELGSKDVKKFYDDIVLIHHTLTKQPCDNIEYLEDSLLDDFDKLTETYDNLYVNQDSPDDERGGTKRKNFINAQFVLYQLLRKHNHPCNSMDFLTLKKSERKRFHHTICKKLFSILEWKYSYSIC.

The protein belongs to the IIV-6 282R family.

In terms of biological role, transcription activation. The polypeptide is Putative transcription factor 079L (Aedes vexans (Inland floodwater mosquito)).